Consider the following 191-residue polypeptide: Lipoprotein signal peptidase (191 aa).

3 helical membrane-spanning segments follow: residues 26 to 46, 84 to 104, and 110 to 130; these read VWFP…LKAW, AVPL…YLLW, and FLTV…IDGL. Catalysis depends on residues Asp-137 and Asp-163. A helical transmembrane segment spans residues 156–176; the sequence is FPIFNIADMCVVGGTILLLVA.

The protein belongs to the peptidase A8 family.

It is found in the cell membrane. The catalysed reaction is Release of signal peptides from bacterial membrane prolipoproteins. Hydrolyzes -Xaa-Yaa-Zaa-|-(S,diacylglyceryl)Cys-, in which Xaa is hydrophobic (preferably Leu), and Yaa (Ala or Ser) and Zaa (Gly or Ala) have small, neutral side chains.. It participates in protein modification; lipoprotein biosynthesis (signal peptide cleavage). Functionally, this protein specifically catalyzes the removal of signal peptides from prolipoproteins. The sequence is that of Lipoprotein signal peptidase from Deinococcus radiodurans (strain ATCC 13939 / DSM 20539 / JCM 16871 / CCUG 27074 / LMG 4051 / NBRC 15346 / NCIMB 9279 / VKM B-1422 / R1).